Here is a 293-residue protein sequence, read N- to C-terminus: Glycine N-methyltransferase (293 aa).

Valine 2 carries the post-translational modification N-acetylvaline. 2 residues coordinate (6S)-5-methyl-5,6,7,8-tetrahydrofolate: serine 4 and tyrosine 6. The residue at position 10 (serine 10) is a Phosphoserine. S-adenosyl-L-methionine-binding residues include tyrosine 22, tryptophan 31, tyrosine 34, and arginine 41. Tyrosine 34 carries the phosphotyrosine modification. Position 46 is an N6-succinyllysine (lysine 46). Residues alanine 65, 86-88 (DAS), 117-118 (NW), leucine 137, 137-140 (LGNS), and arginine 176 contribute to the S-adenosyl-L-methionine site. 3 positions are modified to N6-succinyllysine: lysine 191, lysine 196, and lysine 201. Residue histidine 215 coordinates (6S)-5-methyl-5,6,7,8-tetrahydrofolate. Residue tyrosine 221 participates in S-adenosyl-L-methionine binding. Arginine 240 contacts (6S)-5-methyl-5,6,7,8-tetrahydrofolate.

Belongs to the class I-like SAM-binding methyltransferase superfamily. Glycine N-methyltransferase family. In terms of assembly, homotetramer.

It is found in the cytoplasm. It carries out the reaction glycine + S-adenosyl-L-methionine = sarcosine + S-adenosyl-L-homocysteine + H(+). With respect to regulation, inhibited by 5-methyltetrahydrofolate monoglutamate and by 5-methyltetrahydrofolate pentaglutamate, inhibition is much more effective by the pentaglutamate form than by the monoglutamate form. Two molecules of 5-methyltetrahydrofolate are bound per tetramer. The binding sites are localized between subunits. Inhibitor binding may preclude movements of the polypeptide chain that are necessary for enzyme activity. Catalyzes the methylation of glycine by using S-adenosylmethionine (AdoMet) to form N-methylglycine (sarcosine) with the concomitant production of S-adenosylhomocysteine (AdoHcy), a reaction regulated by the binding of 5-methyltetrahydrofolate. Plays an important role in the regulation of methyl group metabolism by regulating the ratio between S-adenosyl-L-methionine and S-adenosyl-L-homocysteine. In Mus musculus (Mouse), this protein is Glycine N-methyltransferase (Gnmt).